Here is a 568-residue protein sequence, read N- to C-terminus: Probable inactive poly [ADP-ribose] polymerase SRO1 (568 aa).

The segment covering 1–18 has biased composition (basic and acidic residues); it reads MEAKIVKVSDSSYKDGLG. The tract at residues 1–32 is disordered; that stretch reads MEAKIVKVSDSSYKDGLGKKRKHPGNYTPYDS. A WWE domain is found at 77-152; that stretch reads RYFSYYKKTG…ETGVKTQLAW (76 aa). 2 disordered regions span residues 220-241 and 453-500; these read DFQA…DSCS and ILPT…RRPR. A PARP catalytic domain is found at 245-463; it reads DDAVEKWDKT…LPTTQSRHES (219 aa). Positions 497-568 constitute an RST domain; the sequence is RRPRSPIMPF…TITGLQRSLG (72 aa).

As to quaternary structure, interacts with DREB2A, DREB2B, DREB2C and NAC082. In terms of tissue distribution, expressed in young developing tissues, such as young leaves and flowers and root tips. In mature plants, expressed in vasculature of leaves and roots.

The protein localises to the nucleus matrix. Functionally, probable inactive ADP-ribosyltransferase that functions with RCD1 to regulate oxidative stress, hormonal and developmental responses. May regulate some stress-responsive genes. Seems to play a smaller developmental role than R. The polypeptide is Probable inactive poly [ADP-ribose] polymerase SRO1 (SRO1) (Arabidopsis thaliana (Mouse-ear cress)).